The sequence spans 284 residues: NAD kinase (284 aa).

Asp-70 (proton acceptor) is an active-site residue. Residues 70–71 (DG), 139–140 (NE), Lys-167, Asp-169, Leu-177, 180–185 (TAYNLS), and Gln-236 each bind NAD(+).

This sequence belongs to the NAD kinase family. The cofactor is a divalent metal cation.

It is found in the cytoplasm. It carries out the reaction NAD(+) + ATP = ADP + NADP(+) + H(+). Involved in the regulation of the intracellular balance of NAD and NADP, and is a key enzyme in the biosynthesis of NADP. Catalyzes specifically the phosphorylation on 2'-hydroxyl of the adenosine moiety of NAD to yield NADP. This chain is NAD kinase, found in Helicobacter pylori (strain P12).